The following is a 111-amino-acid chain: Cell division protein FtsB (111 aa).

The Cytoplasmic segment spans residues 1–3; it reads MGK. The helical transmembrane segment at 4-21 threads the bilayer; it reads LTLLLLILLGWLQYSLWL. The Periplasmic segment spans residues 22–111; the sequence is GKNGIHDYVR…TNTSSNNTQR (90 aa). Residues 33-63 adopt a coiled-coil conformation; it reads KDDVVVQQGNNAKLKDRNEQLFAEIDDLNGG. The disordered stretch occupies residues 88 to 111; the sequence is VPESNHRNANTPSSTNTSSNNTQR. The segment covering 97-111 has biased composition (low complexity); that stretch reads NTPSSTNTSSNNTQR.

Belongs to the FtsB family. Part of a complex composed of FtsB, FtsL and FtsQ.

The protein localises to the cell inner membrane. Functionally, essential cell division protein. May link together the upstream cell division proteins, which are predominantly cytoplasmic, with the downstream cell division proteins, which are predominantly periplasmic. This is Cell division protein FtsB from Pectobacterium atrosepticum (strain SCRI 1043 / ATCC BAA-672) (Erwinia carotovora subsp. atroseptica).